The chain runs to 276 residues: Nickel import system permease protein NikC (276 aa).

Helical transmembrane passes span 10–30 (LIFFVFVAFIFVVIVLQFFVS), 73–93 (LFVTVLTLIAIVVIGVTLGLF), 108–128 (FIDVGLSIPEFIIMIALASFF), 186–206 (IIPAIIVLMVVDFGKIILYIS), and 238–258 (IMLIAPASVIAITILIFNLTG). An ABC transmembrane type-1 domain is found at 69–258 (ARSTLFVTVL…ITILIFNLTG (190 aa)).

Belongs to the binding-protein-dependent transport system permease family. OppBC subfamily. As to quaternary structure, the complex is composed of two ATP-binding proteins (NikD and NikE), two transmembrane proteins (NikB and NikC) and a solute-binding protein (NikA).

The protein localises to the cell membrane. Its function is as follows. Part of the ABC transporter complex NikABCDE (Opp2) involved in nickel import. Probably responsible for the translocation of the substrate across the membrane. This Staphylococcus aureus (strain Mu50 / ATCC 700699) protein is Nickel import system permease protein NikC.